Here is a 351-residue protein sequence, read N- to C-terminus: Formyl peptide receptor-related sequence 1 (351 aa).

Topologically, residues 1–27 (METNYSIPLNGSDVVIYDSTISRVLWI) are extracellular. 2 N-linked (GlcNAc...) asparagine glycosylation sites follow: N4 and N10. A helical membrane pass occupies residues 28–50 (LSMVVVSITFFLGVLGNGLVIWV). Residues 51–61 (AGFRMPHTVTT) lie on the Cytoplasmic side of the membrane. The helical transmembrane segment at 62–83 (IWYLNLALADFSFTATLPFLLV) threads the bilayer. Over 84 to 100 (EMAMKEKWPFGWFLCKL) the chain is Extracellular. Cysteines 98 and 176 form a disulfide. Residues 101–121 (VHIAVDVNLFGSVFLIAVIAL) traverse the membrane as a helical segment. Over 122-140 (DRCICVLHPVWAQNHRTVS) the chain is Cytoplasmic. A helical membrane pass occupies residues 141–162 (LARNVVVGSWIFALILTLPLFL). Topologically, residues 163–205 (FLTTVRDARGDVHCRLSFVSWGNSVEERLNTAITFVTTRGIIR) are extracellular. The chain crosses the membrane as a helical span at residues 206–226 (FIVSFSLPMSFVAICYGLITT). Over 227–242 (KIHKKAFVNSSRPFRV) the chain is Cytoplasmic. Residues 243 to 266 (LTGVVASFFICWFPFQLVALLGTV) traverse the membrane as a helical segment. The Extracellular segment spans residues 267–286 (WLKEMQFSGSYKIIGRLVNP). The chain crosses the membrane as a helical span at residues 287–306 (TSSLAFFNSCLNPILYVFMG). Topologically, residues 307–351 (QDFQERLIHSLSSRLQRALSEDSGHISDTRTNLASLPEDIEIKAI) are cytoplasmic.

The protein belongs to the G-protein coupled receptor 1 family. In terms of tissue distribution, expressed exclusively in vomeronasal neurons. Expressed in 0.6 % of a subset of sensory neurons located in the basal layer of the vomeronasal organ. Each neuron appears to express only one receptor gene. Expressed mostly in neutrophils, followed by spleen and lung and expressed at very low levels in heart and liver.

Its subcellular location is the cell membrane. In terms of biological role, low affinity receptor for N-formyl-methionyl peptides. Receptor for lipoxin A4. May have an olfactory function associated with the identification of pathogens or of pathogenic states. In Mus musculus (Mouse), this protein is Formyl peptide receptor-related sequence 1 (Fpr-s1).